The following is a 236-amino-acid chain: Phosphoribosylaminoimidazole-succinocarboxamide synthase (236 aa).

It belongs to the SAICAR synthetase family.

The catalysed reaction is 5-amino-1-(5-phospho-D-ribosyl)imidazole-4-carboxylate + L-aspartate + ATP = (2S)-2-[5-amino-1-(5-phospho-beta-D-ribosyl)imidazole-4-carboxamido]succinate + ADP + phosphate + 2 H(+). It functions in the pathway purine metabolism; IMP biosynthesis via de novo pathway; 5-amino-1-(5-phospho-D-ribosyl)imidazole-4-carboxamide from 5-amino-1-(5-phospho-D-ribosyl)imidazole-4-carboxylate: step 1/2. The sequence is that of Phosphoribosylaminoimidazole-succinocarboxamide synthase from Streptococcus equi subsp. zooepidemicus (strain H70).